The primary structure comprises 420 residues: UDP-glucuronic acid decarboxylase 1 (420 aa).

Methionine 1 bears the N-acetylmethionine mark. Residues methionine 1–lysine 19 lie on the Cytoplasmic side of the membrane. The helical; Signal-anchor for type II membrane protein transmembrane segment at leucine 20–methionine 40 threads the bilayer. Over arginine 41 to serine 420 the chain is Lumenal. Phosphothreonine is present on threonine 94. Glycine 98, phenylalanine 99, valine 100, aspartate 119, asparagine 120, phenylalanine 122, threonine 123, glycine 124, aspartate 144, and valine 145 together coordinate NAD(+). UDP-alpha-D-glucuronate is bound by residues leucine 149 and tyrosine 150. NAD(+) contacts are provided by leucine 159 and serine 161. UDP-alpha-D-glucuronate is bound at residue lysine 177. Threonine 178 lines the NAD(+) pocket. 4 residues coordinate UDP-alpha-D-glucuronate: asparagine 185, glycine 188, lysine 191, and arginine 192. NAD(+)-binding residues include alanine 200, tyrosine 231, and lysine 235. Tyrosine 231 (proton acceptor) is an active-site residue. UDP-alpha-D-glucuronate contacts are provided by tyrosine 245, glutamine 248, and glutamate 249. NAD(+) contacts are provided by threonine 261, histidine 267, and arginine 272. An N-linked (GlcNAc...) asparagine glycan is attached at asparagine 316.

It belongs to the NAD(P)-dependent epimerase/dehydratase family. UDP-glucuronic acid decarboxylase subfamily. As to quaternary structure, homodimer and homotetramer. Interacts with AKT1. Requires NAD(+) as cofactor. As to expression, ubiquitous. Detected in heart, brain, spleen, lung, testis, liver, skeletal muscle and kidney.

Its subcellular location is the golgi apparatus. It is found in the golgi stack membrane. It catalyses the reaction UDP-alpha-D-glucuronate + H(+) = UDP-alpha-D-xylose + CO2. It participates in nucleotide-sugar biosynthesis; UDP-alpha-D-xylose biosynthesis; UDP-alpha-D-xylose from UDP-alpha-D-glucuronate: step 1/1. In terms of biological role, catalyzes the NAD-dependent decarboxylation of UDP-glucuronic acid to UDP-xylose. Necessary for the biosynthesis of the core tetrasaccharide in glycosaminoglycan biosynthesis. This chain is UDP-glucuronic acid decarboxylase 1, found in Rattus norvegicus (Rat).